The following is a 188-amino-acid chain: ATP synthase subunit b 2 (188 aa).

Residues 41–61 form a helical membrane-spanning segment; sequence FFWLVISFGFFYFFIARVIVP.

This sequence belongs to the ATPase B chain family. F-type ATPases have 2 components, F(1) - the catalytic core - and F(0) - the membrane proton channel. F(1) has five subunits: alpha(3), beta(3), gamma(1), delta(1), epsilon(1). F(0) has three main subunits: a(1), b(2) and c(10-14). The alpha and beta chains form an alternating ring which encloses part of the gamma chain. F(1) is attached to F(0) by a central stalk formed by the gamma and epsilon chains, while a peripheral stalk is formed by the delta and b chains.

Its subcellular location is the cell inner membrane. Its function is as follows. F(1)F(0) ATP synthase produces ATP from ADP in the presence of a proton or sodium gradient. F-type ATPases consist of two structural domains, F(1) containing the extramembraneous catalytic core and F(0) containing the membrane proton channel, linked together by a central stalk and a peripheral stalk. During catalysis, ATP synthesis in the catalytic domain of F(1) is coupled via a rotary mechanism of the central stalk subunits to proton translocation. Functionally, component of the F(0) channel, it forms part of the peripheral stalk, linking F(1) to F(0). The b'-subunit is a diverged and duplicated form of b found in plants and photosynthetic bacteria. This is ATP synthase subunit b 2 (atpF2) from Bartonella bacilliformis (strain ATCC 35685 / KC583 / Herrer 020/F12,63).